The sequence spans 171 residues: 3-hydroxydecanoyl-[acyl-carrier-protein] dehydratase (171 aa).

Residue histidine 70 is part of the active site.

The protein belongs to the thioester dehydratase family. FabA subfamily. In terms of assembly, homodimer.

The protein resides in the cytoplasm. It carries out the reaction a (3R)-hydroxyacyl-[ACP] = a (2E)-enoyl-[ACP] + H2O. The catalysed reaction is (3R)-hydroxydecanoyl-[ACP] = (2E)-decenoyl-[ACP] + H2O. The enzyme catalyses (2E)-decenoyl-[ACP] = (3Z)-decenoyl-[ACP]. Its pathway is lipid metabolism; fatty acid biosynthesis. In terms of biological role, necessary for the introduction of cis unsaturation into fatty acids. Catalyzes the dehydration of (3R)-3-hydroxydecanoyl-ACP to E-(2)-decenoyl-ACP and then its isomerization to Z-(3)-decenoyl-ACP. Can catalyze the dehydratase reaction for beta-hydroxyacyl-ACPs with saturated chain lengths up to 16:0, being most active on intermediate chain length. This Stenotrophomonas maltophilia (strain K279a) protein is 3-hydroxydecanoyl-[acyl-carrier-protein] dehydratase.